We begin with the raw amino-acid sequence, 298 residues long: Protease HtpX homolog (298 aa).

2 consecutive transmembrane segments (helical) span residues 14-34 (VVLLVVFFALLALIGASAGYL) and 39-59 (YAMGLVLALVIGVIYATSMIF). Residue H143 participates in Zn(2+) binding. Residue E144 is part of the active site. H147 provides a ligand contact to Zn(2+). 2 consecutive transmembrane segments (helical) span residues 158–178 (IAVALASAVTVISSIGGRMLW) and 197–217 (IITLLLSLLSLLLAPLVASLI). E226 lines the Zn(2+) pocket.

This sequence belongs to the peptidase M48B family. Zn(2+) serves as cofactor.

The protein resides in the cell membrane. The protein is Protease HtpX homolog of Streptococcus pyogenes serotype M1.